Consider the following 313-residue polypeptide: Intelectin-1b (313 aa).

The first 19 residues, 1–19 (MTQLGFLLFIMIATRVCSA), serve as a signal peptide directing secretion. The Fibrinogen C-terminal domain occupies 32–251 (SFFSSLPRSC…NNERAASALC (220 aa)). Cys41 and Cys70 are oxidised to a cystine. Residues His86, Glu87, Asn89, Gly92, Gly97, Asp98, and Asp133 each contribute to the Ca(2+) site. 3 cysteine pairs are disulfide-bonded: Cys94/Cys280, Cys199/Cys259, and Cys251/Cys265. Asn163 carries an N-linked (GlcNAc...) asparagine glycan. Ca(2+) is bound by residues Asn260, Glu262, Glu274, and Asp282. A carbohydrate-binding positions include 262–263 (EH) and Glu274. Residue Ser298 is the site of GPI-anchor amidated serine attachment. Positions 299-313 (NSREITEAAVLLFYR) are excised as a propeptide.

In terms of tissue distribution, expressed in the globlet and Paneth cells of the small intestine of infected mice. Expressed in the ileum of uninfected mice.

Its subcellular location is the cell membrane. It localises to the secreted. Functionally, may play a protective role in the innate immune response to parasite infection. This is Intelectin-1b (Itln1b) from Mus musculus (Mouse).